The sequence spans 365 residues: Myb/SANT-like DNA-binding domain-containing protein 3 (365 aa).

Residues 13–78 enclose the Myb-like domain; it reads FSELEKSVLL…QLKKCWENIK (66 aa). A coiled-coil region spans residues 301–337; the sequence is QLIQMNEVHVAKVQQIERECEMAEEEHRIKMEILNKK.

It belongs to the MSANTD3 family.

This chain is Myb/SANT-like DNA-binding domain-containing protein 3 (msantd3), found in Xenopus tropicalis (Western clawed frog).